The sequence spans 292 residues: Elongation factor Ts (292 aa).

An involved in Mg(2+) ion dislocation from EF-Tu region spans residues 82-85 (TDFV).

It belongs to the EF-Ts family.

It is found in the cytoplasm. Its function is as follows. Associates with the EF-Tu.GDP complex and induces the exchange of GDP to GTP. It remains bound to the aminoacyl-tRNA.EF-Tu.GTP complex up to the GTP hydrolysis stage on the ribosome. In Bordetella bronchiseptica (strain ATCC BAA-588 / NCTC 13252 / RB50) (Alcaligenes bronchisepticus), this protein is Elongation factor Ts.